The primary structure comprises 390 residues: 2-oxoisovalerate dehydrogenase subunit beta, mitochondrial (390 aa).

The transit peptide at 1 to 48 directs the protein to the mitochondrion; sequence MAAVAARAGGLLRLGAAGAERRRRGLRCAALVQGFLQPAVDDASQKRR. Tyr150 provides a ligand contact to thiamine diphosphate. Residues Gly176, Leu178, Thr179, Cys226, and Asp229 each coordinate K(+). Residue Lys230 is modified to N6-acetyllysine. Asn231 contributes to the K(+) binding site. Lys239 is subject to N6-acetyllysine.

As to quaternary structure, heterotetramer of 2 alpha/BCKDHA and 2 beta chains/BCKDHB that forms the branched-chain alpha-keto acid decarboxylase (E1) component of the BCKD complex. The branched-chain alpha-ketoacid dehydrogenase is a large complex composed of three major building blocks E1, E2 and E3. It is organized around E2, a 24-meric cubic core composed of DBT, to which are associated 6 to 12 copies of E1, and approximately 6 copies of the dehydrogenase E3, a DLD dimer. It depends on thiamine diphosphate as a cofactor.

It is found in the mitochondrion matrix. It catalyses the reaction N(6)-[(R)-lipoyl]-L-lysyl-[protein] + 3-methyl-2-oxobutanoate + H(+) = N(6)-[(R)-S(8)-2-methylpropanoyldihydrolipoyl]-L-lysyl-[protein] + CO2. In terms of biological role, together with BCKDHA forms the heterotetrameric E1 subunit of the mitochondrial branched-chain alpha-ketoacid dehydrogenase (BCKD) complex. The BCKD complex catalyzes the multi-step oxidative decarboxylation of alpha-ketoacids derived from the branched-chain amino-acids valine, leucine and isoleucine producing CO2 and acyl-CoA which is subsequently utilized to produce energy. The E1 subunit catalyzes the first step with the decarboxylation of the alpha-ketoacid forming an enzyme-product intermediate. A reductive acylation mediated by the lipoylamide cofactor of E2 extracts the acyl group from the E1 active site for the next step of the reaction. The protein is 2-oxoisovalerate dehydrogenase subunit beta, mitochondrial of Rattus norvegicus (Rat).